The primary structure comprises 412 residues: MAFWCQRDSYAREFTTTVVSCCPAELQTEGSNGKKEVLSGFQVVLEDTVLFPEGGGQPDDRGTINDISVLRVTRRGEQADHFTQTPLDPGSQVLVRVDWERRFDHMQQHSGQHLITAVADHLFKLKTTSWELGRFRSAIELDTPSMTAEQVAAIEQSVNEKIRDRLPVNVRELSLDDPEVEQVSGRGLPDDHAGPIRVVNIEGVDSNMCCGTHVSNLSDLQVIKILGTEKGKKNRTNLIFLSGNRVLKWMERSHGTEKALTALLKCGAEDHVEAVKKLQNSTKILQKNNLNLLRDLAVHIAHSLRNSPDWGGVVILHRKEGDSEFMNIIANEIGSEETLLFLTVGDEKGGGLFLLAGPPASVETLGPRVAEVLEGKGAGKKGRFQGKATKMSRRMEAQALLQDYISTQSAKE.

Zn(2+)-binding residues include H109 and H113. S174 carries the phosphoserine modification. Zn(2+)-binding residues include C209 and H213.

Belongs to the class-II aminoacyl-tRNA synthetase family. Alax-L subfamily. Zn(2+) is required as a cofactor.

The protein localises to the cytoplasm. Functionally, functions in trans to edit the amino acid moiety from incorrectly charged tRNA(Ala). The protein is Alanyl-tRNA editing protein Aarsd1 (AARSD1) of Homo sapiens (Human).